The sequence spans 296 residues: Biliverdin reductase A (296 aa).

A propeptide spanning residues 1–2 is cleaved from the precursor; it reads MN. Residues 16-19, 44-46, 77-80, and Y98 each bind NADP(+); these read VGRA, SRR, and SSSH. Position 174 is a phosphothreonine (T174). 2 positions are modified to phosphoserine: S178 and S230. N6-acetyllysine is present on residues K248 and K253. Residues H280, C281, C292, and C293 each coordinate Zn(2+).

This sequence belongs to the Gfo/Idh/MocA family. Biliverdin reductase subfamily. In terms of assembly, monomer. Requires Zn(2+) as cofactor. In terms of tissue distribution, liver.

The protein resides in the cytoplasm. It is found in the cytosol. It carries out the reaction (4Z,15Z)-bilirubin IXalpha + NAD(+) = biliverdin IXalpha + NADH + H(+). It catalyses the reaction (4Z,15Z)-bilirubin IXalpha + NADP(+) = biliverdin IXalpha + NADPH + H(+). The protein operates within porphyrin-containing compound metabolism; protoheme degradation. Functionally, reduces the gamma-methene bridge of the open tetrapyrrole, biliverdin IXalpha, to bilirubin with the concomitant oxidation of a NADH or NADPH cofactor. Does not reduce bilirubin IXbeta. Uses the reactants NADH or NADPH depending on the pH; NADH is used at the acidic pH range (6-6.9) and NADPH at the alkaline range (8.5-8.7). NADPH, however, is the probable reactant in biological systems. The polypeptide is Biliverdin reductase A (Homo sapiens (Human)).